The chain runs to 300 residues: Polyamine aminopropyltransferase (300 aa).

In terms of domain architecture, PABS spans 4-237; that stretch reads WHWHIEWQTP…GLWGFVYASD (234 aa). An S-methyl-5'-thioadenosine-binding site is contributed by Gln33. Spermidine-binding residues include His64 and Glu88. Residues Asp108 and 140–141 contribute to the S-methyl-5'-thioadenosine site; that span reads DG. Asp158 acts as the Proton acceptor in catalysis. S-methyl-5'-thioadenosine is bound at residue Pro167.

The protein belongs to the spermidine/spermine synthase family. Homodimer or homotetramer.

The protein resides in the cytoplasm. It carries out the reaction S-adenosyl 3-(methylsulfanyl)propylamine + putrescine = S-methyl-5'-thioadenosine + spermidine + H(+). Its pathway is amine and polyamine biosynthesis; spermidine biosynthesis; spermidine from putrescine: step 1/1. Functionally, catalyzes the irreversible transfer of a propylamine group from the amino donor S-adenosylmethioninamine (decarboxy-AdoMet) to putrescine (1,4-diaminobutane) to yield spermidine. This chain is Polyamine aminopropyltransferase, found in Sulfurisphaera tokodaii (strain DSM 16993 / JCM 10545 / NBRC 100140 / 7) (Sulfolobus tokodaii).